The sequence spans 619 residues: Transcription factor 7-like 2 (619 aa).

Gly residues predominate over residues Met-1–Asp-11. Residues Met-1–Glu-53 are CTNNB1-binding. The tract at residues Met-1–Lys-96 is disordered. Residues Ile-19–Asp-43 are compositionally biased toward basic and acidic residues. A Glycyl lysine isopeptide (Lys-Gly) (interchain with G-Cter in SUMO2) cross-link involves residue Lys-22. The span at Ser-47–Asn-57 shows a compositional bias: polar residues. Positions Glu-63–Asp-91 are enriched in basic and acidic residues. 2 positions are modified to phosphothreonine; by NLK: Thr-201 and Thr-212. Residues Thr-201–Glu-395 form a mediates interaction with MAD2L2 region. The segment covering Thr-318–Val-328 has biased composition (polar residues). Disordered regions lie at residues Thr-318–Ile-350, Arg-420–His-441, Cys-496–Ser-547, and Asp-574–Glu-619. A Glycyl lysine isopeptide (Lys-Gly) (interchain with G-Cter in SUMO) cross-link involves residue Lys-320. Positions Lys-335 to Lys-346 are enriched in basic and acidic residues. Positions Ile-350–Ser-418 form a DNA-binding region, HMG box. The Nuclear localization signal motif lies at Lys-425–Lys-430. Residues Ser-459–Ser-505 are promoter-specific activation domain. Over residues Cys-496 to Asp-508 the composition is skewed to low complexity. Residue Lys-539 forms a Glycyl lysine isopeptide (Lys-Gly) (interchain with G-Cter in SUMO2) linkage. Over residues Asp-574–Leu-603 the composition is skewed to low complexity. Residues Ala-604–Glu-619 are compositionally biased toward polar residues.

The protein belongs to the TCF/LEF family. As to quaternary structure, interacts with TGFB1I1. Interacts with CTNNB1 (via the armadillo repeat); forms stable transcription complex. Interacts with EP300. Interacts with NLK. Interacts with CCDC85B (probably through the HMG box); prevents interaction with CTNNB1. Interacts with TNIK. Interacts with MAD2L2; prevents TCF7L2/TCF4 binding to promZIPK/DAPK3oters, negatively modulating its transcriptional activity. Interacts with ZIPK/DAPK3. Interacts with XIAP/BIRC4 and TLE3. Interacts with DDIT3/CHOP. The CTNNB1 and TCF7L2/TCF4 complex interacts with PML (isoform PML-4). Identified in a complex with CTNNB1 and FERMT2. Interacts with SPIN1. Interacts with C11orf84/SPINDOC in a SPIN1-dependent manner. Interacts with DAZAP2; the interaction results in localization of DAZAP2 to the nucleus. In vitro, phosphorylated by TNIK. In terms of processing, phosphorylated at Thr-201 and/or Thr-212 by NLK. Phosphorylation by NLK at these sites inhibits DNA-binding by TCF7L2/TCF4, thereby preventing transcriptional activation of target genes of the canonical Wnt/beta-catenin signaling pathway. Post-translationally, polysumoylated. Sumoylation is enhanced by PIAS family members and desumoylation is enhanced by SENP2. Sumoylation/desumoylation regulates TCF7L2/TCF4 transcription activity in the Wnt/beta-catenin signaling pathway without altering interaction with CTNNB1 nor binding to DNA. In terms of tissue distribution, detected in epithelium from small intestine, with the highest expression at the top of the crypts and a gradient of expression from crypt to villus. Detected in colon epithelium and colon cancer, and in epithelium from mammary gland and carcinomas derived therefrom.

Its subcellular location is the nucleus. The protein resides in the PML body. Functionally, participates in the Wnt signaling pathway and modulates MYC expression by binding to its promoter in a sequence-specific manner. Acts as a repressor in the absence of CTNNB1, and as activator in its presence. Activates transcription from promoters with several copies of the Tcf motif 5'-CCTTTGATC-3' in the presence of CTNNB1. TLE1, TLE2, TLE3 and TLE4 repress transactivation mediated by TCF7L2/TCF4 and CTNNB1. Expression of dominant-negative mutants results in cell-cycle arrest in G1. Necessary for the maintenance of the epithelial stem-cell compartment of the small intestine. In Homo sapiens (Human), this protein is Transcription factor 7-like 2 (TCF7L2).